The primary structure comprises 628 residues: Inactive sodium-dependent neutral amino acid transporter B(0)AT3 (628 aa).

Topologically, residues 1 to 26 (MAHAPEPDPAACDLGDERPKWDNKAQ) are cytoplasmic. A helical membrane pass occupies residues 27-47 (YLLSCTGFAVGLGNIWRFPYL). Residues 48-51 (CQTY) are Extracellular-facing. The helical transmembrane segment at 52–74 (GGGAFLIPYVIALVFEGIPIFHV) threads the bilayer. The Cytoplasmic segment spans residues 75–88 (ELAIGQRLRKGSVG). Residues 89–111 (VWTAISPYLSGVGLGCVTLSFLI) traverse the membrane as a helical segment. Over 112–178 (SLYYNTIVAW…ITADINDSGS (67 aa)) the chain is Extracellular. 3 N-linked (GlcNAc...) asparagine glycosylation sites follow: Asn-144, Asn-168, and Asn-174. A helical membrane pass occupies residues 179–201 (IQWWLLICLAASWAVVYMCVIRG). The Cytoplasmic portion of the chain corresponds to 202-207 (IETTGK). The chain crosses the membrane as a helical span at residues 208–230 (VIYFTALFPYLVLTIFLIRGLTL). At 231-253 (PGATKGLIYLFTPNMHILQNPRV) the chain is on the extracellular side. A helical membrane pass occupies residues 254–276 (WLDAATQIFFSLSLAFGGHIAFA). At 277 to 288 (SYNSPRNDCQKD) the chain is on the cytoplasmic side. A helical transmembrane segment spans residues 289–311 (AVVIALVNRMTSLYASIAVFSVL). Residues 312 to 399 (GFKATNDYEH…TETDLHMPGA (88 aa)) are Extracellular-facing. Residue Asn-354 is glycosylated (N-linked (GlcNAc...) asparagine). A helical transmembrane segment spans residues 400–422 (PVWAMLFFGMLFTLGLSTMFGTV). Residues 423–442 (EAVITPLLDVGVLPRWVPKE) lie on the Cytoplasmic side of the membrane. Residues 443–465 (ALTGLVCLVCFLSATCFTLQSGN) form a helical membrane-spanning segment. The Extracellular segment spans residues 466–474 (YWLEIFDNF). The chain crosses the membrane as a helical span at residues 475–497 (AASPNLLMLAFLEVVGVVYVYGM). Residues 498–517 (KRFCDDIAWMTGRRPSPYWR) lie on the Cytoplasmic side of the membrane. Residues 518-540 (LTWRVVSPLLLTIFVAYIILLFW) traverse the membrane as a helical segment. Residues 541–568 (KPLRYKAWNPKYELFPSRQEKLYPGWAR) are Extracellular-facing. A helical transmembrane segment spans residues 569–591 (AACVLLSLLPVLWVPVAALAQLL). At 592-628 (TRRRRTWRDRDARPDTDMRPDTDTRPDTDMRPDTDMR) the chain is on the cytoplasmic side. A disordered region spans residues 602–628 (DARPDTDMRPDTDTRPDTDMRPDTDMR).

Belongs to the sodium:neurotransmitter symporter (SNF) (TC 2.A.22) family. SLC6A18 subfamily. As to expression, abundantly expressed in kidney, but not in intestine.

The protein resides in the membrane. Functionally, does not show neutral amino acid transporter activity. The sequence is that of Inactive sodium-dependent neutral amino acid transporter B(0)AT3 from Homo sapiens (Human).